A 336-amino-acid chain; its full sequence is Dihydroorotate dehydrogenase (quinone) (336 aa).

FMN-binding positions include 62 to 66 (AGLDK) and Thr86. Lys66 contacts substrate. Position 111-115 (111-115 (NRMGF)) interacts with substrate. Asn139 and Asn172 together coordinate FMN. Asn172 lines the substrate pocket. Residue Ser175 is the Nucleophile of the active site. Residue Asn177 coordinates substrate. Residues Lys217 and Thr245 each coordinate FMN. 246 to 247 (NT) provides a ligand contact to substrate. Residues Gly268, Gly297, and 318–319 (FS) each bind FMN.

Belongs to the dihydroorotate dehydrogenase family. Type 2 subfamily. As to quaternary structure, monomer. FMN is required as a cofactor.

It is found in the cell membrane. It catalyses the reaction (S)-dihydroorotate + a quinone = orotate + a quinol. The protein operates within pyrimidine metabolism; UMP biosynthesis via de novo pathway; orotate from (S)-dihydroorotate (quinone route): step 1/1. Catalyzes the conversion of dihydroorotate to orotate with quinone as electron acceptor. In Photorhabdus laumondii subsp. laumondii (strain DSM 15139 / CIP 105565 / TT01) (Photorhabdus luminescens subsp. laumondii), this protein is Dihydroorotate dehydrogenase (quinone).